The following is a 201-amino-acid chain: Small ribosomal subunit protein uS4c (201 aa).

The S4 RNA-binding domain maps to 89–157; sequence MRLDNILFRL…VQNYIASSDP (69 aa).

It belongs to the universal ribosomal protein uS4 family. As to quaternary structure, part of the 30S ribosomal subunit. Contacts protein S5. The interaction surface between S4 and S5 is involved in control of translational fidelity.

It is found in the plastid. Its subcellular location is the chloroplast. Its function is as follows. One of the primary rRNA binding proteins, it binds directly to 16S rRNA where it nucleates assembly of the body of the 30S subunit. In terms of biological role, with S5 and S12 plays an important role in translational accuracy. The polypeptide is Small ribosomal subunit protein uS4c (rps4) (Hordeum vulgare (Barley)).